The sequence spans 381 residues: Putative F-box/kelch-repeat protein At1g60570 (381 aa).

In terms of domain architecture, F-box spans 19–65 (PTLIPSLPEELILSILARVSRLSYRSLSLVCKRFHSLLTSGEIYRFR). Kelch repeat units follow at residues 126-169 (KIYK…LIDG), 171-218 (IYVT…ERTN), 220-266 (LLVD…VIEN), and 269-314 (YDFF…DYGG).

The protein is Putative F-box/kelch-repeat protein At1g60570 of Arabidopsis thaliana (Mouse-ear cress).